We begin with the raw amino-acid sequence, 356 residues long: Stomatin-like protein 2, mitochondrial (356 aa).

A mitochondrion-targeting transit peptide spans 1 to 28 (MLARAARGTGALLLRGSLLASGRAPRRA). Serine 17 carries the phosphoserine; by PKC/PRKCZ modification. Tyrosine 124 carries the phosphotyrosine modification. Lysine 145 is modified (N6-acetyllysine; alternate). An N6-succinyllysine; alternate modification is found at lysine 145. Positions 215–252 (INVAEGKKQAQILASEAEKAEQINQAAGEASAVLAKAK) form a coiled coil. Lysine 233 carries the post-translational modification N6-acetyllysine. The interval 321-356 (KAPVPGTPDSLSSGSSRDVQGTDASLDEELDRVKMS) is disordered. Threonine 327 carries the phosphothreonine modification. Residues 329-343 (DSLSSGSSRDVQGTD) show a composition bias toward polar residues. Serine 330 carries the post-translational modification Phosphoserine.

The protein belongs to the band 7/mec-2 family. As to quaternary structure, forms homooligomers. Interacts with MFN2; may form heterooligomers. Interacts with CACNA2D2. Interacts with PHB1 and PHB2; recruits them to cardiolipin-enriched mitochondrial membranes and stabilizes them. Post-translationally, hyperphosphorylated at Ser-17 in some patients with monoclonal gammopathy of undetermined significance (MGUS), multiple myeloma (MM) and Waldenstrom macroglobulinemia due to impaired dephosphorylation by PP2A. Ubiquitously expressed at low levels. Expressed in lymphoid tissues (at protein level).

It localises to the cell membrane. It is found in the mitochondrion. The protein localises to the mitochondrion inner membrane. Its subcellular location is the mitochondrion intermembrane space. The protein resides in the membrane raft. It localises to the cytoplasm. It is found in the cytoskeleton. Mitochondrial protein that probably regulates the biogenesis and the activity of mitochondria. Stimulates cardiolipin biosynthesis, binds cardiolipin-enriched membranes where it recruits and stabilizes some proteins including prohibitin and may therefore act in the organization of functional microdomains in mitochondrial membranes. Through regulation of the mitochondrial function may play a role into several biological processes including cell migration, cell proliferation, T-cell activation, calcium homeostasis and cellular response to stress. May play a role in calcium homeostasis through negative regulation of calcium efflux from mitochondria. Required for mitochondrial hyperfusion a pro-survival cellular response to stress which results in increased ATP production by mitochondria. May also regulate the organization of functional domains at the plasma membrane and play a role in T-cell activation through association with the T-cell receptor signaling complex and its regulation. This is Stomatin-like protein 2, mitochondrial (STOML2) from Homo sapiens (Human).